The following is a 336-amino-acid chain: Galactose/methyl galactoside import permease protein MglC (336 aa).

Helical transmembrane passes span 17-37, 53-73, 107-127, 128-148, 181-201, 231-251, 257-277, and 306-326; these read AIYFVLLILLGIIIAQDPTFL, LIIALGVAGLLITQGTDLSAG, VVILAVCAIGAVIGLVNGLVI, AYLNVTPFIATMGTMIIIYGF, FKLSYITIYAAIAALLVWIMW, LVAIYMIAGMFYAFGGMLEAG, TNNLGFMYELDAIAACVVGGV, and IGVNPYWQYIIKGSIIILAVA.

This sequence belongs to the binding-protein-dependent transport system permease family. AraH/RbsC subfamily. In terms of assembly, the complex is composed of one ATP-binding protein (MglA), two transmembrane proteins (MglC) and a solute-binding protein (MglB).

Its subcellular location is the cell inner membrane. Part of the ABC transporter complex MglABC involved in galactose/methyl galactoside import. Probably responsible for the translocation of the substrate across the membrane. The sequence is that of Galactose/methyl galactoside import permease protein MglC (mglC) from Haemophilus influenzae (strain ATCC 51907 / DSM 11121 / KW20 / Rd).